We begin with the raw amino-acid sequence, 585 residues long: MDRIFARFFCFLLIAAVSHAADLSPEQYWRSILPNTPMPSSISQLLNYPYLPAVRLPRRTDAGQRNYKSSVSHVAERSHRVDDGQRNYKLSALPATNELPHRTDAGQRNYKSSVSPVAELPHRVDDGQRNYKLSALPATNELPHRTDAGQRNYKSSVSPMAELSHRVDDGQRNYKLSALPATNELPHHTDAGQRNYKSSVSPVAELPHRVDDGQRNYKLSALPATNELPHRTDAGQRNYKSSVSPVAELPHRVDDGQRNYKLSALPATNELPHRIDAGQRNYKSSVSPMAELPHRADDGQRNYKLSVSPAAELPHRVDDGQRNYKLSVLPATELVHYTDGQRNYKSSVLETPELLKDPDMALFFLEKNLQQGKKINNALHFANLLATTNSKFLPRGKADSIPFSSKELPEILDRFGVRPGSDDAAEMSATLQDCELPANKGEKKACATSLESIVDFVTSSFGASDVDAASTVVLSKAVESSSLAQDYTVSGVRRMAGTGQLIACHPESYPYAVFMCHLTEATTRAYKASLVGKDGTAVEAVAVCHTDTSDWNPEHAAFHVLGVKPGTVPVCHFMQPDAVVWTRRG.

The first 20 residues, 1–20 (MDRIFARFFCFLLIAAVSHA), serve as a signal peptide directing secretion. The tract at residues 63–82 (GQRNYKSSVSHVAERSHRVD) is disordered. Positions 363–584 (FFLEKNLQQG…QPDAVVWTRR (222 aa)) constitute a BURP domain.

Expressed in leaves.

This Oryza sativa subsp. japonica (Rice) protein is BURP domain-containing protein 17 (BURP17).